The primary structure comprises 101 residues: DNA-binding protein HU (101 aa).

The protein belongs to the bacterial histone-like protein family. As to quaternary structure, homodimer.

Histone-like DNA-binding protein which is capable of wrapping DNA to stabilize it, and thus to prevent its denaturation under extreme environmental conditions. In Rickettsia bellii (strain RML369-C), this protein is DNA-binding protein HU (hup).